The following is a 140-amino-acid chain: Probable prefoldin subunit 6 (140 aa).

This sequence belongs to the prefoldin subunit beta family. Heterohexamer of two PFD-alpha type and four PFD-beta type subunits.

Binds specifically to cytosolic chaperonin (c-CPN) and transfers target proteins to it. Binds to nascent polypeptide chain and promotes folding in an environment in which there are many competing pathways for nonnative proteins. This Dictyostelium discoideum (Social amoeba) protein is Probable prefoldin subunit 6 (pfdn6).